The following is a 551-amino-acid chain: Cytochrome P450 monooxygenase virE (551 aa).

An N-terminal signal peptide occupies residues 1–25 (MPKPWVVFGLGTLVLFLWRLNKIGR). Asparagine 392 carries N-linked (GlcNAc...) asparagine glycosylation. Residue cysteine 439 coordinates heme.

It belongs to the cytochrome P450 family. It depends on heme as a cofactor.

Its pathway is secondary metabolite biosynthesis. Its function is as follows. Cytochrome P450 monooxygenase; part of the gene cluster that mediates the biosynthesis of virensols and trichoxide, fungal natural products that contain or are derived from a salicylaldehyde core. The pathway begins with the synthesis of the reduced chain in virensol C by the highly reducing polyketide synthase virA via condensation of one acetate and 8 malonate units. VirA has interesting programming rules since the first 2 ketides are fully reduced, the 3 following ketides undergo beta-dehydration, and the last 3 ketides are only reduced to beta-hydroxys to yield the trihydroxy portion. The production of aldehyde virensol C by virA alone is surprising, since virA does not contain a reductase (R) domain that is typically associated with reductive product release in HRPKS. The cupin-domain enzyme virC is involved in enhancing virA product turnover. The short-chain dehydrogenase virB then oxidizes the C-7 alcohol of virensol C to a ketone, yielding virensol D. Virensol D is further transformed to salicylaldehyde 5-deoxyaurocitrin by the short-chain dehydrogenase virD. VirD catalyzes the dehydrogenation of C-3 to form the beta-ketone aldehyde, which is followed by the generation of the nucleophilic C-2 that is required for the intramolecular aldol condensation between C-2 and C-7, itself followed by dehydration and aromatization which leads to salicylaldehyde 5-deoxyaurocitrin. While the dehydrogenation of virensol D is definitely catalyzed by virD, the aldol condensation and dehydration may be uncatalyzed or assisted by virD. The short chain dehydrogenase virG then converts salicylaldehyde 5-deoxyaurocitrin into virensol B which is further hydroxylated by the cytochrome P450 monooxygenase virE to yield the hydroquinone virensol A. VirI then may oxidize virensol A to form the quinone, while virH performs the epoxidation. Finally, the two remaining short-chain dehydrogenases, virK and virL, are probably responsible for reducing the ketones to the corresponding alcohols to furnish the epoxycyclohexanol structure in trichoxide. This Hypocrea virens (strain Gv29-8 / FGSC 10586) (Gliocladium virens) protein is Cytochrome P450 monooxygenase virE.